The following is a 497-amino-acid chain: Beta-glucosidase 8 (497 aa).

The N-terminal stretch at Met-1 to Ala-22 is a signal peptide. Residue Gln-42 participates in a beta-D-glucoside binding. Asn-65 is a glycosylation site (N-linked (GlcNAc...) asparagine). A beta-D-glucoside-binding positions include His-139 and Asn-184–Glu-185. Catalysis depends on Glu-185, which acts as the Proton donor. N-linked (GlcNAc...) asparagine glycosylation occurs at Asn-202. An a beta-D-glucoside-binding site is contributed by Tyr-319. A glycan (N-linked (GlcNAc...) asparagine) is linked at Asn-354. The a beta-D-glucoside site is built by Glu-387, Trp-430, and Phe-446. The Nucleophile role is filled by Glu-387. Residues Asn-452, Asn-474, and Asn-490 are each glycosylated (N-linked (GlcNAc...) asparagine).

This sequence belongs to the glycosyl hydrolase 1 family.

It carries out the reaction Hydrolysis of terminal, non-reducing beta-D-glucosyl residues with release of beta-D-glucose.. The chain is Beta-glucosidase 8 from Arabidopsis thaliana (Mouse-ear cress).